A 198-amino-acid polypeptide reads, in one-letter code: Na(+)-translocating NADH-quinone reductase subunit E (198 aa).

6 helical membrane-spanning segments follow: residues 11 to 31 (SVFI…FLAV), 35 to 55 (VSTA…AVPV), 77 to 97 (FLNF…LEMI), 110 to 130 (GIFL…SFMV), 140 to 160 (VVYG…LAGL), and 176 to 196 (LGIT…FSGI).

Belongs to the NqrDE/RnfAE family. As to quaternary structure, composed of six subunits; NqrA, NqrB, NqrC, NqrD, NqrE and NqrF.

Its subcellular location is the cell inner membrane. It catalyses the reaction a ubiquinone + n Na(+)(in) + NADH + H(+) = a ubiquinol + n Na(+)(out) + NAD(+). In terms of biological role, NQR complex catalyzes the reduction of ubiquinone-1 to ubiquinol by two successive reactions, coupled with the transport of Na(+) ions from the cytoplasm to the periplasm. NqrA to NqrE are probably involved in the second step, the conversion of ubisemiquinone to ubiquinol. The protein is Na(+)-translocating NADH-quinone reductase subunit E of Haemophilus ducreyi (strain 35000HP / ATCC 700724).